Reading from the N-terminus, the 608-residue chain is N(6)-adenosine-methyltransferase MT-A70-like protein (608 aa).

A compositionally biased stretch (basic and acidic residues) spans 250 to 265 (KKKQERRDEKELRPDV). The disordered stretch occupies residues 250-272 (KKKQERRDEKELRPDVDAGENVT). S-adenosyl-L-methionine is bound by residues 395–396 (DL) and aspartate 413. Residues 414–428 (PPWDIHMELPYGTMS) form a gate loop 1 region. The interval 480 to 497 (QLQRIIRTGRTGHWLNHG) is interphase loop. Residues 483–496 (RIIRTGRTGHWLNH) are positively charged region required for RNA-binding. Residues 525–533 (VRATSHKPD) are gate loop 2. Residues lysine 531, 554–557 (RPHN), and 567–568 (NQ) each bind S-adenosyl-L-methionine.

The protein belongs to the MT-A70-like family. As to quaternary structure, component of the WMM complex, a N6-methyltransferase complex composed of a catalytic subcomplex, named MAC, and of an associated subcomplex, named MACOM. The MAC subcomplex is composed of Ime4/Mettl3 and Mettl14. The MACOM subcomplex is composed of fl(2)d, Flacc/Xio, Hakai, vir, and, in some cases of nito. In terms of tissue distribution, expressed in testes. In the ovaries, detected in germaria, prefollicle, follicle and polar cells (at protein levels). Detected in the ooplasm and in the cells of the 16-cell cyst of early stages (at protein levels).

Its subcellular location is the nucleus. It catalyses the reaction an adenosine in mRNA + S-adenosyl-L-methionine = an N(6)-methyladenosine in mRNA + S-adenosyl-L-homocysteine + H(+). Its function is as follows. Catalytic component of the WMM complex, a complex that mediates N6-methyladenosine (m6A) methylation of mRNAs, a modification that plays a role in the efficiency of mRNA splicing and is required for sex determination. In the heterodimer formed with Mettl14, constitutes the catalytic core. Required for sex determination and dosage compensation via Sxl alternative splicing: m6A methylation acts as a key regulator of Sxl pre-mRNA and promotes female-specific alternative splicing of Sxl, which determines female physiognomy. M6A methylation is also required for neuronal functions. During oogenesis, required for egg chamber development probably as part of the N/Notch signaling. The chain is N(6)-adenosine-methyltransferase MT-A70-like protein from Drosophila melanogaster (Fruit fly).